A 375-amino-acid polypeptide reads, in one-letter code: F-box/kelch-repeat protein At4g39240 (375 aa).

Residues 1–15 (MPFSAASSSSVSSIA) show a composition bias toward low complexity. Positions 1 to 27 (MPFSAASSSSVSSIAEEPPPKKQHDPS) are disordered. The F-box domain occupies 31–77 (SSYLLLLPDEIILNCLARLPKCYYPVISLVSKTFRRLIASPEIYVER). 3 Kelch repeats span residues 140–186 (EIYV…FFDG), 187–232 (KLYV…RSFA), and 275–321 (KIYT…GNLA).

In Arabidopsis thaliana (Mouse-ear cress), this protein is F-box/kelch-repeat protein At4g39240.